A 640-amino-acid chain; its full sequence is Probable potassium transport system protein Kup 2 (640 aa).

12 helical membrane passes run 19-39, 67-87, 118-138, 155-175, 181-201, 230-250, 265-285, 307-327, 355-375, 384-404, 415-435, and 437-457; these read LFSSTTFLLALGSLGVVYGDI, VLSLVFWSMTMVICVKYVVFV, GVVAFAATLGASLLYGDGVIT, EAAKPLVVPLTCVVLLALFLV, GVIGNVFGPIMIVWFVTIAAL, FVGVVVLGSVVLCITGGEALY, WLGLAFPALLLNYFGQGALLL, MVCLSTIATVIASQAMISGVF, VYIPEVNYLLMIACLGLVLVF, AYGIAVTADMALTSILFFFVI, AVPLLVLFLFFDLSYFGANLF, and IFDGGWITLTIAAIVATSMIT.

The protein belongs to the HAK/KUP transporter (TC 2.A.72) family.

The protein resides in the cell inner membrane. It catalyses the reaction K(+)(in) + H(+)(in) = K(+)(out) + H(+)(out). Transport of potassium into the cell. Likely operates as a K(+):H(+) symporter. The sequence is that of Probable potassium transport system protein Kup 2 from Syntrophobacter fumaroxidans (strain DSM 10017 / MPOB).